The primary structure comprises 242 residues: Type III pantothenate kinase (242 aa).

Position 6–13 (6–13 (DAGNTRLK)) interacts with ATP. Substrate-binding positions include Tyr90 and 97 to 100 (GADR). The active-site Proton acceptor is the Asp99. Asp119 lines the K(+) pocket. Ser122 lines the ATP pocket. Thr174 is a substrate binding site.

It belongs to the type III pantothenate kinase family. In terms of assembly, homodimer. It depends on NH4(+) as a cofactor. Requires K(+) as cofactor.

Its subcellular location is the cytoplasm. The catalysed reaction is (R)-pantothenate + ATP = (R)-4'-phosphopantothenate + ADP + H(+). It participates in cofactor biosynthesis; coenzyme A biosynthesis; CoA from (R)-pantothenate: step 1/5. Its function is as follows. Catalyzes the phosphorylation of pantothenate (Pan), the first step in CoA biosynthesis. This is Type III pantothenate kinase from Marinobacter nauticus (strain ATCC 700491 / DSM 11845 / VT8) (Marinobacter aquaeolei).